The primary structure comprises 144 residues: Maximins 3/H11 type 2 (144 aa).

Residues 1–18 form the signal peptide; that stretch reads MHFKYIVAVSFLIASAYA. 2 consecutive propeptides follow at residues 19 to 43 and 73 to 122; these read RSVQ…REIR and RTAE…KKEK. Position 143 is an isoleucine amide (Ile-143).

Belongs to the bombinin family. In terms of tissue distribution, expressed by the skin glands.

It localises to the secreted. Its function is as follows. Maximin-3 shows antibacterial activity against both Gram-positive and Gram-negative bacteria. It also shows antimicrobial activity against the fungus C.albicans, but not against A.flavus nor P.uticale. It has little hemolytic activity. It possess a significant cytotoxicity against tumor cell lines. It possess a significant anti-HIV activity. It shows high spermicidal activity. Functionally, maximin-H11 shows antimicrobial activity against bacteria and against the fungus C.albicans. Shows strong hemolytic activity. The sequence is that of Maximins 3/H11 type 2 from Bombina maxima (Giant fire-bellied toad).